Consider the following 2060-residue polypeptide: Fatty acid synthase subunit beta (2060 aa).

The tract at residues 1 to 32 is disordered; the sequence is MFPGDMESKASSMNGDQPSSPTPSSSTSVTIP. Over residues 18-32 the composition is skewed to low complexity; sequence PSSPTPSSSTSVTIP. The acetyltransferase (AT) domain stretch occupies residues 182–543; that stretch reads VYVIFGGQGN…KAGQGVRVIH (362 aa). The active-site For acetyltransferase activity is the S301. Positions 600–845 are enoyl reductase (ER) domain; sequence TRLFLQPPIM…LIVATEGAPD (246 aa). A dehydratase (DH) domain region spans residues 1157 to 1640; sequence DKNLNWAKAL…CTGDRLAVSM (484 aa). The region spanning 1549-1661 is the MaoC-like domain; it reads FEEQEISFTA…VEVQIHKNMA (113 aa). The interval 1679–2043 is malonyl/palmitoyl transferase (MT/PT) domain; sequence LVFTGQGSQK…FNEVLRLTGS (365 aa). S1824 serves as the catalytic For malonyltransferase activity.

This sequence belongs to the fungal fatty acid synthetase subunit beta family. As to quaternary structure, [Alpha(6)beta(6)] hexamers of two multifunctional subunits (alpha and beta).

The enzyme catalyses acetyl-CoA + n malonyl-CoA + 2n NADPH + 4n H(+) = a long-chain-acyl-CoA + n CoA + n CO2 + 2n NADP(+).. It catalyses the reaction holo-[ACP] + acetyl-CoA = acetyl-[ACP] + CoA. The catalysed reaction is holo-[ACP] + malonyl-CoA = malonyl-[ACP] + CoA. It carries out the reaction a (3R)-hydroxyacyl-[ACP] = a (2E)-enoyl-[ACP] + H2O. The enzyme catalyses a 2,3-saturated acyl-[ACP] + NAD(+) = a (2E)-enoyl-[ACP] + NADH + H(+). It catalyses the reaction (9Z)-octadecenoyl-[ACP] + H2O = (9Z)-octadecenoate + holo-[ACP] + H(+). The protein operates within mycotoxin biosynthesis. Fatty acid synthase subunit beta; part of the gene cluster that mediates the biosynthesis of gramillins A and B, bicyclic lipopeptides that induce cell death in maize leaves but not in wheat leaves. The nonribosomal peptide synthetase GRA1 incorporates respectively a glutamic adic (Glu), a leucine (Leu), a serine (Ser), a hydroxyglutamine (HOGln), a 2-amino decanoic acid, and 2 cysteins (CysB and CysA). The biosynthesis of 2-amino decanoic acid incorporated in gramillins could be initiated by a fatty acid synthase composed of the alpha and beta subunits FGSG_00036 and FGSG_11656. The cytochrome P450 monooxygenase FGSG_15680 could hydroxylate the fatty acid chain. Subsequent oxidation to the ketone by the oxidoreductase FGSG_00048 and transamination by aminotransferase FGSG_00049 could form 2-amino-decanoic acid. On the other hand, FGSG_15680 could also be responsible for the HO-modified glutamine at the gamma-position. Whether hydroxylation occurs on the fully assembled product or on the Gln residue prior to assembly into the gramillins requires further proof. The thioredoxin FGSG_00043 could also be required for the disulfide-bond formation between CysA and CysB. The specific involvement of the remaining proteins from the cluster is more difficult to discern, but could have broader regulatory (FGSG_00040 and FGSG_11657) or enzymatic functions (FGSG_00044 and FGSG_00045). The final C-domain of GRA1 does not possess the expected sequence of a termination CT domain, often implicated in macrocyclization and release of a cyclopeptidein fungal NRPs; and the thioesterase FGSG_00047 may act in concert with the terminal C-domain of GRA1 to catalyze the formation of the macrocyclic anhydride and release of the products. This is Fatty acid synthase subunit beta from Gibberella zeae (strain ATCC MYA-4620 / CBS 123657 / FGSC 9075 / NRRL 31084 / PH-1) (Wheat head blight fungus).